Consider the following 920-residue polypeptide: Chitin synthase C (920 aa).

Disordered regions lie at residues 1–41 (MSYN…NAYQ) and 140–173 (IPML…SPAP). Positions 154-163 (YSDEYQVEEQ) are enriched in acidic residues. The next 5 helical transmembrane spans lie at 466 to 486 (SAFG…FVAL), 564 to 584 (RWLN…YQIW), 608 to 628 (LFAW…TTYL), 640 to 660 (VLGV…FVLA), and 675 to 695 (MVYF…FVTV). N-linked (GlcNAc...) asparagine glycosylation is present at asparagine 715. Helical transmembrane passes span 718 to 738 (FFTI…ASII), 749 to 769 (FIQY…YAFC), 847 to 867 (AVVL…LSAA), and 892 to 912 (VVLW…LWYL).

The protein belongs to the chitin synthase family. Class I subfamily.

It is found in the cell membrane. It catalyses the reaction [(1-&gt;4)-N-acetyl-beta-D-glucosaminyl](n) + UDP-N-acetyl-alpha-D-glucosamine = [(1-&gt;4)-N-acetyl-beta-D-glucosaminyl](n+1) + UDP + H(+). Functionally, polymerizes chitin, a structural polymer of the cell wall and septum, by transferring the sugar moiety of UDP-GlcNAc to the non-reducing end of the growing chitin polymer. Involved in hyphal growth. This is Chitin synthase C from Aspergillus oryzae (strain ATCC 42149 / RIB 40) (Yellow koji mold).